Reading from the N-terminus, the 189-residue chain is Putative transcription factor ovo-like protein 3 (189 aa).

The interval 1–20 (MPRVFLVRSRRPQPPNWSHL) is disordered. 4 consecutive C2H2-type zinc fingers follow at residues 69-91 (LGCP…LKCH), 97-119 (HVCH…MRTH), 125-148 (FRCG…AKVH), and 164-186 (HVCE…RTLH).

It belongs to the krueppel C2H2-type zinc-finger protein family.

It localises to the nucleus. Its function is as follows. May act as a transcription regulator. This chain is Putative transcription factor ovo-like protein 3 (Ovol3), found in Mus musculus (Mouse).